A 171-amino-acid polypeptide reads, in one-letter code: Putative rhomboid protein L523 (171 aa).

Transmembrane regions (helical) follow at residues 3 to 23, 67 to 87, 94 to 114, and 119 to 139; these read YVTY…LNFF, FAFC…AEHT, VYTV…LMSL, and GLSI…SGIS. The Nucleophile role is filled by Ser-100. The active site involves His-143. A helical transmembrane segment spans residues 144–164; the sequence is ICGMIAGFVYVVLFPLPKGSV.

Belongs to the peptidase S54 family.

The protein localises to the membrane. In terms of biological role, probable serine protease. The polypeptide is Putative rhomboid protein L523 (Acanthamoeba polyphaga mimivirus (APMV)).